A 217-amino-acid chain; its full sequence is Response regulator RR06 (217 aa).

Residues 2 to 115 enclose the Response regulatory domain; that stretch reads NILVADDEEM…LLVKRIKALI (114 aa). Position 51 is a 4-aspartylphosphate (Asp51). Positions 122-217 form a DNA-binding region, ompR/PhoB-type; that stretch reads EDIWRYQDVT…VKNVGYKISL (96 aa).

In terms of processing, phosphorylated at threonine residues by StkP; threonine phosphorylation enhances RR06 binding to DNA and may also increase expression of CbpA. May be de-phosphorylated by PhpP.

Its function is as follows. Member of the two-component regulatory system HK06/RR06 involved in regulation of target genes, including choline-binding protein CbpA. Binds to the promoter region of CbpA and directly activates transcription. This is Response regulator RR06 from Streptococcus pneumoniae serotype 2 (strain D39 / NCTC 7466).